The sequence spans 325 residues: NADH-quinone oxidoreductase subunit H (325 aa).

Helical transmembrane passes span 11 to 31 (ILLTILKAVVILLVVVTCGAF), 81 to 101 (VIFTLAPMIAFTSLLLAFAIV), 114 to 134 (IGILFFLMMAGLAVYAVLFAG), 154 to 174 (LSYEVFLGLSLMGVVAQAGSF), 186 to 206 (VWNVIPQFFGFITFAIAGVAV), 237 to 257 (FFVGEYIGIVTISALMVTLFF), 265 to 285 (LPPFIWFALKTAFFMMMFILI), and 304 to 324 (ICLPLTLINLLVTAAVILWQA).

The protein belongs to the complex I subunit 1 family. In terms of assembly, NDH-1 is composed of 13 different subunits. Subunits NuoA, H, J, K, L, M, N constitute the membrane sector of the complex.

Its subcellular location is the cell inner membrane. The catalysed reaction is a quinone + NADH + 5 H(+)(in) = a quinol + NAD(+) + 4 H(+)(out). Functionally, NDH-1 shuttles electrons from NADH, via FMN and iron-sulfur (Fe-S) centers, to quinones in the respiratory chain. The immediate electron acceptor for the enzyme in this species is believed to be ubiquinone. Couples the redox reaction to proton translocation (for every two electrons transferred, four hydrogen ions are translocated across the cytoplasmic membrane), and thus conserves the redox energy in a proton gradient. This subunit may bind ubiquinone. The polypeptide is NADH-quinone oxidoreductase subunit H (Escherichia coli O7:K1 (strain IAI39 / ExPEC)).